A 329-amino-acid polypeptide reads, in one-letter code: DNA-directed RNA polymerase subunit alpha (329 aa).

The alpha N-terminal domain (alpha-NTD) stretch occupies residues 1–235 (MQGSVTEFLK…EQLDAFVDLR (235 aa)). An alpha C-terminal domain (alpha-CTD) region spans residues 249–329 (FDPILLRPVD…NWPPASIAED (81 aa)).

Belongs to the RNA polymerase alpha chain family. Homodimer. The RNAP catalytic core consists of 2 alpha, 1 beta, 1 beta' and 1 omega subunit. When a sigma factor is associated with the core the holoenzyme is formed, which can initiate transcription.

It carries out the reaction RNA(n) + a ribonucleoside 5'-triphosphate = RNA(n+1) + diphosphate. Functionally, DNA-dependent RNA polymerase catalyzes the transcription of DNA into RNA using the four ribonucleoside triphosphates as substrates. The polypeptide is DNA-directed RNA polymerase subunit alpha (Actinobacillus pleuropneumoniae serotype 5b (strain L20)).